Here is a 161-residue protein sequence, read N- to C-terminus: Nucleotide-binding protein SO_3815 (161 aa).

This sequence belongs to the YajQ family.

Functionally, nucleotide-binding protein. The protein is Nucleotide-binding protein SO_3815 of Shewanella oneidensis (strain ATCC 700550 / JCM 31522 / CIP 106686 / LMG 19005 / NCIMB 14063 / MR-1).